The primary structure comprises 273 residues: Formamidopyrimidine-DNA glycosylase (273 aa).

The active-site Schiff-base intermediate with DNA is P2. E3 (proton donor) is an active-site residue. The active-site Proton donor; for beta-elimination activity is K57. DNA contacts are provided by H90, R109, and K150. The FPG-type zinc finger occupies 235–269; sequence KVYGRAGKECPVCSSKIEEEKIGQRNSFWCGKCQF. R259 functions as the Proton donor; for delta-elimination activity in the catalytic mechanism.

Belongs to the FPG family. As to quaternary structure, monomer. Requires Zn(2+) as cofactor.

It catalyses the reaction Hydrolysis of DNA containing ring-opened 7-methylguanine residues, releasing 2,6-diamino-4-hydroxy-5-(N-methyl)formamidopyrimidine.. The catalysed reaction is 2'-deoxyribonucleotide-(2'-deoxyribose 5'-phosphate)-2'-deoxyribonucleotide-DNA = a 3'-end 2'-deoxyribonucleotide-(2,3-dehydro-2,3-deoxyribose 5'-phosphate)-DNA + a 5'-end 5'-phospho-2'-deoxyribonucleoside-DNA + H(+). In terms of biological role, involved in base excision repair of DNA damaged by oxidation or by mutagenic agents. Acts as a DNA glycosylase that recognizes and removes damaged bases. Has a preference for oxidized purines, such as 7,8-dihydro-8-oxoguanine (8-oxoG). Has AP (apurinic/apyrimidinic) lyase activity and introduces nicks in the DNA strand. Cleaves the DNA backbone by beta-delta elimination to generate a single-strand break at the site of the removed base with both 3'- and 5'-phosphates. This chain is Formamidopyrimidine-DNA glycosylase, found in Aliivibrio fischeri (strain MJ11) (Vibrio fischeri).